Here is a 288-residue protein sequence, read N- to C-terminus: Zinc finger protein 42 (288 aa).

Basic and acidic residues-rich tracts occupy residues Met-1–Lys-11 and Ala-26–Arg-38. The tract at residues Met-1–Pro-48 is disordered. C2H2-type zinc fingers lie at residues Leu-170 to His-194, His-199 to His-221, Tyr-227 to His-251, and Val-258 to His-281. Residues Lys-213 and Lys-215 each participate in a glycyl lysine isopeptide (Lys-Gly) (interchain with G-Cter in ubiquitin) cross-link.

The protein belongs to the krueppel C2H2-type zinc-finger protein family. Polyubiquitinated by RNF12, leading to proteasomal degradation. Restricted to testis, to germ cells in the early stages of spermatogenesis. Not expressed in spermatids, nor spermatozoa. Expressed in embryonic stem (ES) cells.

It localises to the nucleus. Involved in the reprogramming of X-chromosome inactivation during the acquisition of pluripotency. Required for efficient elongation of TSIX, a non-coding RNA antisense to XIST. Binds DXPas34 enhancer within the TSIX promoter. Involved in ES cell self-renewal. The polypeptide is Zinc finger protein 42 (Zfp42) (Mus musculus (Mouse)).